The following is a 190-amino-acid chain: Threonylcarbamoyl-AMP synthase (190 aa).

The region spanning 7 to 190 (NFVLADIVRA…ALTGKRFRQG (184 aa)) is the YrdC-like domain.

This sequence belongs to the SUA5 family. TsaC subfamily.

It is found in the cytoplasm. It catalyses the reaction L-threonine + hydrogencarbonate + ATP = L-threonylcarbamoyladenylate + diphosphate + H2O. Functionally, required for the formation of a threonylcarbamoyl group on adenosine at position 37 (t(6)A37) in tRNAs that read codons beginning with adenine. Catalyzes the conversion of L-threonine, HCO(3)(-)/CO(2) and ATP to give threonylcarbamoyl-AMP (TC-AMP) as the acyladenylate intermediate, with the release of diphosphate. This is Threonylcarbamoyl-AMP synthase from Yersinia pestis bv. Antiqua (strain Angola).